We begin with the raw amino-acid sequence, 349 residues long: Farnesyl pyrophosphate synthase (349 aa).

Lys-48, Arg-51, and Gln-90 together coordinate isopentenyl diphosphate. Asp-97 and Asp-101 together coordinate Mg(2+). Arg-106 lines the dimethylallyl diphosphate pocket. An isopentenyl diphosphate-binding site is contributed by Arg-107. Residues Lys-194, Thr-195, Gln-234, Lys-251, and Lys-260 each coordinate dimethylallyl diphosphate.

It belongs to the FPP/GGPP synthase family. Mg(2+) serves as cofactor.

Its subcellular location is the cytoplasm. It catalyses the reaction isopentenyl diphosphate + dimethylallyl diphosphate = (2E)-geranyl diphosphate + diphosphate. It carries out the reaction isopentenyl diphosphate + (2E)-geranyl diphosphate = (2E,6E)-farnesyl diphosphate + diphosphate. It participates in isoprenoid biosynthesis; farnesyl diphosphate biosynthesis; farnesyl diphosphate from geranyl diphosphate and isopentenyl diphosphate: step 1/1. It functions in the pathway isoprenoid biosynthesis; geranyl diphosphate biosynthesis; geranyl diphosphate from dimethylallyl diphosphate and isopentenyl diphosphate: step 1/1. Catalyzes the sequential condensation of isopentenyl pyrophosphate with the allylic pyrophosphates, dimethylallyl pyrophosphate, and then with the resultant geranylpyrophosphate to the ultimate product farnesyl pyrophosphate. This chain is Farnesyl pyrophosphate synthase (FPS1), found in Kluyveromyces lactis (strain ATCC 8585 / CBS 2359 / DSM 70799 / NBRC 1267 / NRRL Y-1140 / WM37) (Yeast).